The chain runs to 155 residues: Ribosome maturation factor RimP (155 aa).

Belongs to the RimP family.

Its subcellular location is the cytoplasm. Functionally, required for maturation of 30S ribosomal subunits. In Staphylococcus epidermidis (strain ATCC 35984 / DSM 28319 / BCRC 17069 / CCUG 31568 / BM 3577 / RP62A), this protein is Ribosome maturation factor RimP.